The primary structure comprises 327 residues: MQQLTEIVEQALVIIDQASDLKALDDIRVDYLGKKGKITDMMKMMGSLSPEEKPAFGQAVNDAKQAIQQKLTERIDGLKSSELEAKLIAEKIDVTLPGRTQEIGGLHPVTRTIERIETFFGELGFSVKQGPEIEDDFHNFDALNISEHHPARADHDTFYFNPKLMLRTQTSGVQIRTMETEKPPLRIISPGRVYRNDYDQTHTPMFHQVEGLLVDEHVNFAELKGILHDFLRNFFEEDLQVRFRPSYFPFTEPSAEVDVMGKNGKWLEVLGCGMVHPNVLRSVGIDPEKYSGFAFGMGVERLTMLRYGVNDLRSFFENDLRFLKQFK.

Glu-252 serves as a coordination point for Mg(2+).

It belongs to the class-II aminoacyl-tRNA synthetase family. Phe-tRNA synthetase alpha subunit type 1 subfamily. As to quaternary structure, tetramer of two alpha and two beta subunits. The cofactor is Mg(2+).

It is found in the cytoplasm. It catalyses the reaction tRNA(Phe) + L-phenylalanine + ATP = L-phenylalanyl-tRNA(Phe) + AMP + diphosphate + H(+). The protein is Phenylalanine--tRNA ligase alpha subunit of Shewanella baltica (strain OS223).